Reading from the N-terminus, the 371-residue chain is D-alanine--D-alanine ligase (371 aa).

The 208-residue stretch at 154 to 361 (KKLLVAEGLP…YPTLLAAMVD (208 aa)) folds into the ATP-grasp domain. 182–237 (RERLGLPVFVKPARGGSSIGVSRVSDWAELPAAIEAARRHDPKVIVEAGIAGRELE) contacts ATP. 3 residues coordinate Mg(2+): D316, E328, and N330.

This sequence belongs to the D-alanine--D-alanine ligase family. Mg(2+) is required as a cofactor. It depends on Mn(2+) as a cofactor.

Its subcellular location is the cytoplasm. It carries out the reaction 2 D-alanine + ATP = D-alanyl-D-alanine + ADP + phosphate + H(+). It functions in the pathway cell wall biogenesis; peptidoglycan biosynthesis. Functionally, cell wall formation. This Mycobacterium sp. (strain KMS) protein is D-alanine--D-alanine ligase.